A 349-amino-acid chain; its full sequence is Putative methylesterase 12, chloroplastic (349 aa).

The N-terminal 77 residues, 1–77 (MGNRVICMKK…GSTSSRRGTL (77 aa)), are a transit peptide targeting the chloroplast. Residues 61–80 (GSMSRRIGSTSSRRGTLSDS) are disordered. S173 serves as the catalytic Acyl-ester intermediate. Catalysis depends on charge relay system residues D300 and H328.

It belongs to the AB hydrolase superfamily. Methylesterase family.

The protein localises to the plastid. It is found in the chloroplast. In terms of biological role, putative methylesterase. This is Putative methylesterase 12, chloroplastic from Arabidopsis thaliana (Mouse-ear cress).